The primary structure comprises 350 residues: NADH-quinone oxidoreductase subunit H (350 aa).

The next 8 membrane-spanning stretches (helical) occupy residues 31–51 (LMLLAVVGVLAFLFLNALFLI), 102–122 (LLAPVLIFTIPVMLFLVIPFG), 132–152 (LGVLYLVAITSVETIVLWMAG), 171–191 (MLSYEMPVILAMLSVVMMAGS), 205–225 (WFIFLQPVGFLIYFIAVNAEF), 263–283 (FMIGAIMVTTLFLGGWNAPFG), 286–306 (FIPSWLWFIIKMYFVITLYMW), and 322–342 (FAWKFLLPVSLANIFITGFGL).

Belongs to the complex I subunit 1 family. NDH-1 is composed of 14 different subunits. Subunits NuoA, H, J, K, L, M, N constitute the membrane sector of the complex.

The protein resides in the cell membrane. It catalyses the reaction a quinone + NADH + 5 H(+)(in) = a quinol + NAD(+) + 4 H(+)(out). In terms of biological role, NDH-1 shuttles electrons from NADH, via FMN and iron-sulfur (Fe-S) centers, to quinones in the respiratory chain. The immediate electron acceptor for the enzyme in this species is believed to be ubiquinone. Couples the redox reaction to proton translocation (for every two electrons transferred, four hydrogen ions are translocated across the cytoplasmic membrane), and thus conserves the redox energy in a proton gradient. This subunit may bind ubiquinone. This chain is NADH-quinone oxidoreductase subunit H, found in Carboxydothermus hydrogenoformans (strain ATCC BAA-161 / DSM 6008 / Z-2901).